Reading from the N-terminus, the 103-residue chain is Protamine-3 (103 aa).

The segment at methionine 1–serine 103 is disordered. Residues threonine 10–serine 21 show a composition bias toward low complexity. The span at glycine 50–glutamate 66 shows a compositional bias: acidic residues. The span at glutamate 78–alanine 90 shows a compositional bias: basic and acidic residues. The residue at position 95 (serine 95) is a Phosphoserine.

It belongs to the protamine P3 family.

The protein localises to the nucleus. It localises to the chromosome. Functionally, protamines substitute for histones in the chromatin of sperm during the haploid phase of spermatogenesis. They compact sperm DNA into a highly condensed, stable and inactive complex. The sequence is that of Protamine-3 (PRM3) from Homo sapiens (Human).